We begin with the raw amino-acid sequence, 220 residues long: Thiamine-phosphate synthase (220 aa).

4-amino-2-methyl-5-(diphosphooxymethyl)pyrimidine is bound by residues 38-42 (QYRDK) and Asn70. Residues Asp71 and Asp90 each coordinate Mg(2+). Thr109 serves as a coordination point for 4-amino-2-methyl-5-(diphosphooxymethyl)pyrimidine. 135–137 (TVS) serves as a coordination point for 2-[(2R,5Z)-2-carboxy-4-methylthiazol-5(2H)-ylidene]ethyl phosphate. Lys138 serves as a coordination point for 4-amino-2-methyl-5-(diphosphooxymethyl)pyrimidine. Residues Gly171 and 191 to 192 (IS) contribute to the 2-[(2R,5Z)-2-carboxy-4-methylthiazol-5(2H)-ylidene]ethyl phosphate site.

This sequence belongs to the thiamine-phosphate synthase family. Mg(2+) is required as a cofactor.

It carries out the reaction 2-[(2R,5Z)-2-carboxy-4-methylthiazol-5(2H)-ylidene]ethyl phosphate + 4-amino-2-methyl-5-(diphosphooxymethyl)pyrimidine + 2 H(+) = thiamine phosphate + CO2 + diphosphate. It catalyses the reaction 2-(2-carboxy-4-methylthiazol-5-yl)ethyl phosphate + 4-amino-2-methyl-5-(diphosphooxymethyl)pyrimidine + 2 H(+) = thiamine phosphate + CO2 + diphosphate. The catalysed reaction is 4-methyl-5-(2-phosphooxyethyl)-thiazole + 4-amino-2-methyl-5-(diphosphooxymethyl)pyrimidine + H(+) = thiamine phosphate + diphosphate. The protein operates within cofactor biosynthesis; thiamine diphosphate biosynthesis; thiamine phosphate from 4-amino-2-methyl-5-diphosphomethylpyrimidine and 4-methyl-5-(2-phosphoethyl)-thiazole: step 1/1. Functionally, condenses 4-methyl-5-(beta-hydroxyethyl)thiazole monophosphate (THZ-P) and 2-methyl-4-amino-5-hydroxymethyl pyrimidine pyrophosphate (HMP-PP) to form thiamine monophosphate (TMP). This Agrobacterium fabrum (strain C58 / ATCC 33970) (Agrobacterium tumefaciens (strain C58)) protein is Thiamine-phosphate synthase.